The chain runs to 655 residues: Sphingomyelin phosphodiesterase 3 (655 aa).

Topologically, residues 1-10 are cytoplasmic; sequence MVLYTTPFPN. Residues 11 to 31 constitute an intramembrane region (helical); sequence SCLSALHAVSWALIFPCYWLV. Residues 32–64 are Cytoplasmic-facing; sequence DRLLASFIPTTYEKRQRADDPCCLQLFCTVLFT. Residues Cys-53, Cys-54, and Cys-59 are each lipidated (S-palmitoyl cysteine). The segment at residues 65 to 85 is an intramembrane region (helical); that stretch reads PVYLALLVAALPFAFLGFIFW. At 86-655 the chain is on the cytoplasmic side; it reads SPLQSARRPY…LMVSAGEEEA (570 aa). The residue at position 178 (Ser-178) is a Phosphoserine. A disordered region spans residues 209–318; it reads VEYKGDGGRH…SGGSGEPGAN (110 aa). Composition is skewed to basic and acidic residues over residues 211-221 and 246-255; these read YKGDGGRHPSD and GGEEGGRPQE. Ser-289 is modified (phosphoserine). Residue Glu-362 participates in Mg(2+) binding. Residues Cys-395 and Cys-396 are each lipidated (S-palmitoyl cysteine). His-639 acts as the Proton acceptor in catalysis.

This sequence belongs to the neutral sphingomyelinase family. The cofactor is Mg(2+). In terms of processing, palmitoylated, palmitoylation-deficient proteins are targeted for lysosomal degradation. Predominantly expressed in brain (at protein level).

It localises to the golgi apparatus membrane. The protein resides in the cell membrane. It catalyses the reaction a sphingomyelin + H2O = phosphocholine + an N-acylsphing-4-enine + H(+). The enzyme catalyses N-(15Z-tetracosenoyl)sphing-4-enine-1-phosphocholine + H2O = N-(15Z-tetracosenoyl)-sphing-4-enine + phosphocholine + H(+). The catalysed reaction is N-(tetracosanoyl)-sphing-4-enine-1-phosphocholine + H2O = N-tetracosanoyl-sphing-4-enine + phosphocholine + H(+). It carries out the reaction N-(hexadecanoyl)-sphing-4-enine-1-phosphocholine + H2O = N-hexadecanoylsphing-4-enine + phosphocholine + H(+). It catalyses the reaction an N-(acyl)-sphingosylphosphocholine + H2O = an N-acyl-sphingoid base + phosphocholine + H(+). The enzyme catalyses 1-hexadecanoyl-sn-glycero-3-phosphocholine + H2O = 1-hexadecanoyl-sn-glycerol + phosphocholine + H(+). The catalysed reaction is 1-O-octadecyl-sn-glycero-3-phosphocholine + H2O = 1-O-octadecyl-sn-glycerol + phosphocholine + H(+). It carries out the reaction a sphingosylphosphocholine + H2O = a sphingoid base + phosphocholine + H(+). It functions in the pathway lipid metabolism; sphingolipid metabolism. Inhibited by nSMase inhibitor GW4869. Binding of anionic phospholipids (APLs) such as phosphatidylserine (PS) and phosphatidic acid (PA) increases enzymatic activity. In terms of biological role, catalyzes the hydrolysis of sphingomyelin to form ceramide and phosphocholine. Ceramide mediates numerous cellular functions, such as apoptosis and growth arrest, and is capable of regulating these 2 cellular events independently. Also hydrolyzes sphingosylphosphocholine. Regulates the cell cycle by acting as a growth suppressor in confluent cells. Probably acts as a regulator of postnatal development and participates in bone and dentin mineralization. Binds to anionic phospholipids (APLs) such as phosphatidylserine (PS) and phosphatidic acid (PA) that modulate enzymatic activity and subcellular location. May be involved in IL-1-beta-induced JNK activation in hepatocytes. May act as a mediator in transcriptional regulation of NOS2/iNOS via the NF-kappa-B activation under inflammatory conditions. The polypeptide is Sphingomyelin phosphodiesterase 3 (Mus musculus (Mouse)).